Reading from the N-terminus, the 467-residue chain is MTFNDKNFMLKNQAAKQLYTAVQDQPIFDYHCHLDPKEIFEDKVFENIVDLWLGGDHYKWRLMRANGISEEEITGSASQLDKFKAFARTLQRSYGNPVYHWSAMELKNVFGIEEVLTEENAEEIYNRLNTYLLENKVSPRKLIADSKVTFIGTTDHPLDTLEWHQKLAEDKSFETIVAPTFRPDEAFIEHHNFKGFLDKLSQATGKEMTEFKDFISAMEDRIAYFAENGCKASDISFTEIVFEAAEESELNELLAKVKDGYKPNALEVKQWQTAVFAELCQLYKKYGFVTQVHFGALRNNHSKLYQKLGADVGIDSLGDQTALTSNMNKLLDNLVQKDALPKMIWYNLNPSYNIAVANTLANFQANEEGVKSYLQFGAGWWFADTKLGMISQMNALAEQGMLANFVGMLTDSRSFLSYQRHDYFRRILCTYLGEWIEEGEVPEDYEALGHMAKDIAYHNAVNYFKHE.

This sequence belongs to the metallo-dependent hydrolases superfamily. Uronate isomerase family.

It carries out the reaction D-glucuronate = D-fructuronate. The catalysed reaction is aldehydo-D-galacturonate = keto-D-tagaturonate. Its pathway is carbohydrate metabolism; pentose and glucuronate interconversion. In Streptococcus uberis (strain ATCC BAA-854 / 0140J), this protein is Uronate isomerase.